The chain runs to 418 residues: Putative competence-damage inducible protein (418 aa).

The protein belongs to the CinA family.

The chain is Putative competence-damage inducible protein from Streptococcus pneumoniae (strain JJA).